Reading from the N-terminus, the 213-residue chain is MSKLRTEDMSHPVKPLRSFLIQDILSHMGPGSKEKSLGFPKTDQDQDSSLRDTEEKYASEKLQSSSQPAEIHHSHMEADENLELDTAQPITAVENKLAKQQQKRSRAAFSHSQVIELERKFSSQKYLSAPERAQLAKSLKLTETQVKIWFQNRRYKTKRKQLATDMEEVEKSSAHPAQCRDTNISRTSLLSFYQNYQRYPYLYYLAGWPAPLW.

Residues 24–72 (ILSHMGPGSKEKSLGFPKTDQDQDSSLRDTEEKYASEKLQSSSQPAEIH) are disordered. The segment covering 32–59 (SKEKSLGFPKTDQDQDSSLRDTEEKYAS) has biased composition (basic and acidic residues). A DNA-binding region (homeobox) is located at residues 102-161 (QKRSRAAFSHSQVIELERKFSSQKYLSAPERAQLAKSLKLTETQVKIWFQNRRYKTKRKQ).

The protein belongs to the NK-3 homeobox family. As to expression, expressed in the muscle layer of embryonic somites. In tailbud embryos, expressed throughout the entire myotome but at the mid-tailbud stage (stage 32), expression becomes restricted to the outer periphery of the somite so that by the tadpole stage only the outer, type I cells show expression. Also expressed in the dorsal cement gland and in the myocardial layer of the developing heart. In all tissues, expression begins after terminal differentiation.

It localises to the nucleus. Its function is as follows. May regulate cell proliferation in a tissue-specific manner. This is Homeobox protein koza from Xenopus laevis (African clawed frog).